Reading from the N-terminus, the 377-residue chain is MSMSPTVIILACLGFFLDQSVWAHVGGQDKPFCSAWPSAVVPQGGHVTLRCHYRRGFNIFTLYKKDGVPVPELYNRIFWNSFLISPVTPAHAGTYRCRGFHPHSPTEWSAPSNPLVIMVTGLYEKPSLTARPGPTVRAGENVTLSCSSQSSFDIYHLSREGEAHELRLPAVPSINGTFQADFPLGPATHGETYRCFGSFHGSPYEWSDPSDPLPVSVTGNPSSSWPSPTEPSFKTGIARHLHAVIRYSVAIILFTILPFFLLHRWCSKKKDAAVMNQEPAGHRTVNREDSDEQDPQEVTYAQLDHCIFTQRKITGPSQRSKRPSTDTSVCIELPNAEPRALSPAHEHHSQALMGSSRETTALSQTQLASSNVPAAGI.

Residues 1 to 21 form the signal peptide; it reads MSMSPTVIILACLGFFLDQSV. Residues 22–242 lie on the Extracellular side of the membrane; the sequence is WAHVGGQDKP…FKTGIARHLH (221 aa). 2 Ig-like C2-type domains span residues 44 to 104 and 139 to 202; these read GGHV…HPHS and GENV…FHGS. A disulfide bond links Cys51 and Cys97. Residues Asn141 and Asn175 are each glycosylated (N-linked (GlcNAc...) asparagine). Residues Cys146 and Cys195 are joined by a disulfide bond. The chain crosses the membrane as a helical span at residues 243 to 263; that stretch reads AVIRYSVAIILFTILPFFLLH. Residues 264–377 are Cytoplasmic-facing; sequence RWCSKKKDAA…ASSNVPAAGI (114 aa). The interval 338–377 is disordered; the sequence is PRALSPAHEHHSQALMGSSRETTALSQTQLASSNVPAAGI. Over residues 352–377 the composition is skewed to polar residues; it reads LMGSSRETTALSQTQLASSNVPAAGI.

The protein belongs to the immunoglobulin superfamily. Interacts with peptide-bound HLA-G-B2M heterotrimeric complex. Interacts with ARRB2. As to expression, expressed in decidual NK cells and innate lymphoid cell type I (ILC1). Expressed in a subset of peripheral NK cells.

It is found in the cell membrane. It localises to the early endosome membrane. Its function is as follows. Receptor for non-classical major histocompatibility class Ib HLA-G molecules. Recognizes HLA-G in complex with B2M/beta-2 microglobulin and a nonamer self-peptide (peptide-bound HLA-G-B2M). In decidual NK cells, binds peptide-bound HLA-G-B2M complex and triggers NK cell senescence-associated secretory phenotype as a molecular switch to promote vascular remodeling and fetal growth in early pregnancy. May play a role in balancing tolerance and antiviral-immunity at maternal-fetal interface by keeping in check the effector functions of NK, CD8+ T cells and B cells. Upon interaction with peptide-bound HLA-G-B2M, initiates signaling from the endosomal compartment leading to downstream activation of PRKDC-XRCC5 and AKT1, and ultimately triggering NF-kappa-B-dependent pro-inflammatory response. This is Killer cell immunoglobulin-like receptor 2DL4 from Homo sapiens (Human).